Reading from the N-terminus, the 294-residue chain is uncharacterized protein (294 aa).

Residues 259-294 (LNAPTPIPPPITSHAGQEEALKPQRASKGKKAKARK) form a disordered region. The segment covering 283 to 294 (RASKGKKAKARK) has biased composition (basic residues).

This is an uncharacterized protein from Homo sapiens (Human).